The sequence spans 185 residues: Ubiquitin-conjugating enzyme E2 5 (185 aa).

In terms of domain architecture, UBC core spans 1-148 (MSSPSKRREM…VKEYCEKYAK (148 aa)). The active-site Glycyl thioester intermediate is Cys-85. The disordered stretch occupies residues 146–185 (YAKPRADTEEMSSDDEMSEDEYASDGDDEDDVAIAGKLDP). A compositionally biased stretch (acidic residues) spans 154–177 (EEMSSDDEMSEDEYASDGDDEDDV).

This sequence belongs to the ubiquitin-conjugating enzyme family. As to expression, expressed in developing ovules, but not in vascular tissues.

The enzyme catalyses S-ubiquitinyl-[E1 ubiquitin-activating enzyme]-L-cysteine + [E2 ubiquitin-conjugating enzyme]-L-cysteine = [E1 ubiquitin-activating enzyme]-L-cysteine + S-ubiquitinyl-[E2 ubiquitin-conjugating enzyme]-L-cysteine.. The protein operates within protein modification; protein ubiquitination. Functionally, accepts the ubiquitin from the E1 complex and catalyzes its covalent attachment to other proteins. The polypeptide is Ubiquitin-conjugating enzyme E2 5 (UBC5) (Arabidopsis thaliana (Mouse-ear cress)).